Consider the following 190-residue polypeptide: NADH-quinone oxidoreductase subunit B (190 aa).

[4Fe-4S] cluster-binding residues include C69, C70, C134, and C164.

It belongs to the complex I 20 kDa subunit family. As to quaternary structure, NDH-1 is composed of 14 different subunits. Subunits NuoB, C, D, E, F, and G constitute the peripheral sector of the complex. [4Fe-4S] cluster is required as a cofactor.

The protein localises to the cell inner membrane. It catalyses the reaction a quinone + NADH + 5 H(+)(in) = a quinol + NAD(+) + 4 H(+)(out). Functionally, NDH-1 shuttles electrons from NADH, via FMN and iron-sulfur (Fe-S) centers, to quinones in the respiratory chain. Couples the redox reaction to proton translocation (for every two electrons transferred, four hydrogen ions are translocated across the cytoplasmic membrane), and thus conserves the redox energy in a proton gradient. The polypeptide is NADH-quinone oxidoreductase subunit B (Chelativorans sp. (strain BNC1)).